A 445-amino-acid chain; its full sequence is Methionine aminopeptidase 2 (445 aa).

The tract at residues methionine 1–leucine 89 is disordered. Basic residues predominate over residues alanine 60 to asparagine 74. Histidine 198 serves as a coordination point for substrate. Positions 218, 229, and 298 each coordinate a divalent metal cation. Histidine 306 lines the substrate pocket. Residues glutamate 331 and glutamate 426 each contribute to the a divalent metal cation site.

It belongs to the peptidase M24A family. Methionine aminopeptidase eukaryotic type 2 subfamily. Co(2+) is required as a cofactor. Zn(2+) serves as cofactor. Requires Mn(2+) as cofactor. The cofactor is Fe(2+).

It localises to the cytoplasm. It catalyses the reaction Release of N-terminal amino acids, preferentially methionine, from peptides and arylamides.. Cotranslationally removes the N-terminal methionine from nascent proteins. The N-terminal methionine is often cleaved when the second residue in the primary sequence is small and uncharged (Met-Ala-, Cys, Gly, Pro, Ser, Thr, or Val). This is Methionine aminopeptidase 2 from Podospora anserina (strain S / ATCC MYA-4624 / DSM 980 / FGSC 10383) (Pleurage anserina).